The primary structure comprises 93 residues: Regulatory protein RepI (93 aa).

Functionally, this protein is involved in regulating the plasmid copy-number. Increasing the level of this protein results in a higher plasmid copy-number. The protein is Regulatory protein RepI (repI) of Escherichia coli.